Consider the following 456-residue polypeptide: UDP-N-acetylglucosamine 1-carboxyvinyltransferase (456 aa).

34–35 (KN) contacts phosphoenolpyruvate. Position 104 (Arg104) interacts with UDP-N-acetyl-alpha-D-glucosamine. Cys128 functions as the Proton donor in the catalytic mechanism. Position 128 is a 2-(S-cysteinyl)pyruvic acid O-phosphothioketal (Cys128). Asp319 and Ile341 together coordinate UDP-N-acetyl-alpha-D-glucosamine.

The protein belongs to the EPSP synthase family. MurA subfamily.

It localises to the cytoplasm. The catalysed reaction is phosphoenolpyruvate + UDP-N-acetyl-alpha-D-glucosamine = UDP-N-acetyl-3-O-(1-carboxyvinyl)-alpha-D-glucosamine + phosphate. The protein operates within cell wall biogenesis; peptidoglycan biosynthesis. Cell wall formation. Adds enolpyruvyl to UDP-N-acetylglucosamine. In Prochlorococcus marinus (strain AS9601), this protein is UDP-N-acetylglucosamine 1-carboxyvinyltransferase.